The sequence spans 387 residues: MEVNRKDNSFLITGGGGYFGFRLACALLKTSSKVVLFDVSPPIQDLPEGLIFMRADIRDYAQVEKAVRGSHCVFHIASYGMSGREQLNRKLIEEVNVKGTENILRACVAHSVPRLIYTSTFNVVFGGQEIKNGDESLPYLPLHLHPDHYSRTKSIAEMQVLKANNLALSNSTGVLRTCALRPAGIYGPGEQRHLPRIVSYIENGIFRFVYGDPDSLVEFVHVDNLVSAHLLAADALTEKQQCRAAGQAYFISDGRPVNNFEFFRPLVEGLGYSFPTLRLPISMIYFFAFLTEMVHFVVGRIYNFQPLLTRTEVYKTGVTHYFSMRKAREELGYEPKLYDLEDVVQWFQARGHGKKRSRSSIRKLILDVFVVVAFVAVLLSCLPVVGQ.

Catalysis depends on Tyr-149, which acts as the Proton acceptor. Lys-153 contributes to the NAD(+) binding site. The next 2 membrane-spanning stretches (helical) occupy residues 279–299 (LPISMIYFFAFLTEMVHFVVG) and 365–385 (ILDVFVVVAFVAVLLSCLPVV).

This sequence belongs to the 3-beta-HSD family.

The protein localises to the membrane. This Danio rerio (Zebrafish) protein is Short-chain dehydrogenase/reductase family 42E member 1 (sdr42e1).